The chain runs to 224 residues: Ribonuclease HII (224 aa).

The 185-residue stretch at 17-201 (GTVIGVDEAG…VLSNLSVKKV (185 aa)) folds into the RNase H type-2 domain. A divalent metal cation is bound by residues D23, E24, and D111.

The protein belongs to the RNase HII family. Mn(2+) is required as a cofactor. It depends on Mg(2+) as a cofactor.

Its subcellular location is the cytoplasm. It carries out the reaction Endonucleolytic cleavage to 5'-phosphomonoester.. Its function is as follows. Endonuclease that specifically degrades the RNA of RNA-DNA hybrids. The polypeptide is Ribonuclease HII (Pseudothermotoga lettingae (strain ATCC BAA-301 / DSM 14385 / NBRC 107922 / TMO) (Thermotoga lettingae)).